The chain runs to 185 residues: Peptidyl-tRNA hydrolase (185 aa).

TRNA is bound at residue Y14. The active-site Proton acceptor is H19. Positions 64, 66, and 112 each coordinate tRNA.

The protein belongs to the PTH family. As to quaternary structure, monomer.

It localises to the cytoplasm. It carries out the reaction an N-acyl-L-alpha-aminoacyl-tRNA + H2O = an N-acyl-L-amino acid + a tRNA + H(+). Hydrolyzes ribosome-free peptidyl-tRNAs (with 1 or more amino acids incorporated), which drop off the ribosome during protein synthesis, or as a result of ribosome stalling. Its function is as follows. Catalyzes the release of premature peptidyl moieties from peptidyl-tRNA molecules trapped in stalled 50S ribosomal subunits, and thus maintains levels of free tRNAs and 50S ribosomes. This chain is Peptidyl-tRNA hydrolase, found in Alkaliphilus metalliredigens (strain QYMF).